A 55-amino-acid chain; its full sequence is Protein CADMIUM TOLERANCE 1 (55 aa).

The chain crosses the membrane as a helical span at residues 24–40 (GCLYACIFTALCCFCCY).

This sequence belongs to the CYSTM1 family.

It localises to the cell membrane. The protein resides in the secreted. It is found in the cell wall. Its function is as follows. Confers resistance to heavy metal ions (e.g. cadmium (CdCl(2)) and copper (CuCl(2))) by chelating them at the plasma membrane of root cells, thus stopping their entry and reducing their accumulation. This chain is Protein CADMIUM TOLERANCE 1, found in Digitaria ciliaris (Southern crabgrass).